The primary structure comprises 304 residues: Methionyl-tRNA formyltransferase (304 aa).

Residue 106–109 (SLLP) participates in (6S)-5,6,7,8-tetrahydrofolate binding.

This sequence belongs to the Fmt family.

The catalysed reaction is L-methionyl-tRNA(fMet) + (6R)-10-formyltetrahydrofolate = N-formyl-L-methionyl-tRNA(fMet) + (6S)-5,6,7,8-tetrahydrofolate + H(+). In terms of biological role, attaches a formyl group to the free amino group of methionyl-tRNA(fMet). The formyl group appears to play a dual role in the initiator identity of N-formylmethionyl-tRNA by promoting its recognition by IF2 and preventing the misappropriation of this tRNA by the elongation apparatus. This is Methionyl-tRNA formyltransferase from Thermosipho africanus (strain TCF52B).